Reading from the N-terminus, the 300-residue chain is Nicotinate-nucleotide pyrophosphorylase [carboxylating] (300 aa).

The tract at residues 5–9 is important for hexamer formation; that stretch reads QLLPK. Quinolinate is bound by residues Arg107, 150-151, 172-173, Lys183, Glu213, Asp234, 260-262, and Gly282; these read RK, HR, and SGG.

Belongs to the NadC/ModD family. In terms of assembly, hexamer formed by 3 homodimers.

The enzyme catalyses nicotinate beta-D-ribonucleotide + CO2 + diphosphate = quinolinate + 5-phospho-alpha-D-ribose 1-diphosphate + 2 H(+). It participates in cofactor biosynthesis; NAD(+) biosynthesis; nicotinate D-ribonucleotide from quinolinate: step 1/1. Involved in the catabolism of quinolinic acid (QA). The polypeptide is Nicotinate-nucleotide pyrophosphorylase [carboxylating] (qprt) (Dictyostelium discoideum (Social amoeba)).